Here is a 146-residue protein sequence, read N- to C-terminus: MHSSLETTAPATLERRESNLGDKLILKGLKFYGFHGAIAEERTLGQMFLVDIDAWVSLKKAGESDNLEDTISYVDIFSLAKEIVEGSPRNLLETVAELIASKTLEKFHQINAVRVKLSKPNVALIKSTIDYLGVDIFRQRNTSSKN.

Substrate-binding positions include Glu41, Tyr73, and 92–93; that span reads LE. Lys119 serves as the catalytic Proton donor/acceptor.

This sequence belongs to the DHNA family. In terms of assembly, homooctamer. Forms a hollow cylinder assembled from two ring-shaped tetramers. In terms of tissue distribution, expressed in roots, leaves, stems and siliques.

The enzyme catalyses 7,8-dihydroneopterin = 6-hydroxymethyl-7,8-dihydropterin + glycolaldehyde. It participates in cofactor biosynthesis; tetrahydrofolate biosynthesis; 2-amino-4-hydroxy-6-hydroxymethyl-7,8-dihydropteridine diphosphate from 7,8-dihydroneopterin triphosphate: step 3/4. Its function is as follows. Catalyzes the conversion of 7,8-dihydroneopterin into 6-hydroxymethyl-7,8-dihydropterin, a biosynthetic precursor of the vitamin tetrahydrofolate. Can use L-threo-dihydroneopterin and D-erythro-dihydroneopterin as substrates for the formation of 6-hydroxymethyldihydropterin, but it can also catalyze the epimerization of carbon 2' of dihydroneopterin and dihydromonapterin. The sequence is that of Dihydroneopterin aldolase 1 from Arabidopsis thaliana (Mouse-ear cress).